A 76-amino-acid chain; its full sequence is ATP synthase subunit 9, mitochondrial (76 aa).

2 helical membrane-spanning segments follow: residues 14-34 and 48-68; these read ISTI…AALI and FPFA…CLMV.

Belongs to the ATPase C chain family. In terms of assembly, F-type ATPases have 2 components, CF(1) - the catalytic core - and CF(0) - the membrane proton channel. CF(1) has five subunits: alpha(3), beta(3), gamma(1), delta(1), epsilon(1). CF(0) has three main subunits: a, b and c.

The protein resides in the mitochondrion membrane. Mitochondrial membrane ATP synthase (F(1)F(0) ATP synthase or Complex V) produces ATP from ADP in the presence of a proton gradient across the membrane which is generated by electron transport complexes of the respiratory chain. F-type ATPases consist of two structural domains, F(1) - containing the extramembraneous catalytic core and F(0) - containing the membrane proton channel, linked together by a central stalk and a peripheral stalk. During catalysis, ATP synthesis in the catalytic domain of F(1) is coupled via a rotary mechanism of the central stalk subunits to proton translocation. Part of the complex F(0) domain. A homomeric c-ring of probably 10 subunits is part of the complex rotary element. The polypeptide is ATP synthase subunit 9, mitochondrial (ATP9) (Cyberlindnera mrakii (Yeast)).